The primary structure comprises 177 residues: Large ribosomal subunit protein uL6 (177 aa).

Belongs to the universal ribosomal protein uL6 family. As to quaternary structure, part of the 50S ribosomal subunit.

In terms of biological role, this protein binds to the 23S rRNA, and is important in its secondary structure. It is located near the subunit interface in the base of the L7/L12 stalk, and near the tRNA binding site of the peptidyltransferase center. This is Large ribosomal subunit protein uL6 from Proteus mirabilis (strain HI4320).